A 545-amino-acid chain; its full sequence is Lysine--tRNA ligase (545 aa).

The 'HIGH' region signature appears at 41–49; sequence PSGVPHLGH. Residues 306 to 310 carry the 'KMSKS' region motif; the sequence is ALSSS.

This sequence belongs to the class-I aminoacyl-tRNA synthetase family.

Its subcellular location is the cytoplasm. The catalysed reaction is tRNA(Lys) + L-lysine + ATP = L-lysyl-tRNA(Lys) + AMP + diphosphate. This chain is Lysine--tRNA ligase, found in Natronomonas pharaonis (strain ATCC 35678 / DSM 2160 / CIP 103997 / JCM 8858 / NBRC 14720 / NCIMB 2260 / Gabara) (Halobacterium pharaonis).